The primary structure comprises 282 residues: Probable protein phosphatase 2C 10 (282 aa).

One can recognise a PPM-type phosphatase domain in the interval 34–281 (KFGYSLVKGK…DDISCIVVRL (248 aa)). Mn(2+) is bound by residues D71, G72, D233, and D272.

Belongs to the PP2C family. Requires Mg(2+) as cofactor. Mn(2+) serves as cofactor.

The catalysed reaction is O-phospho-L-seryl-[protein] + H2O = L-seryl-[protein] + phosphate. It catalyses the reaction O-phospho-L-threonyl-[protein] + H2O = L-threonyl-[protein] + phosphate. In Arabidopsis thaliana (Mouse-ear cress), this protein is Probable protein phosphatase 2C 10.